The sequence spans 589 residues: MTVGRTAGGPECAEWSREIFPPKSSSSDTEPEDEQFGEGLVLPRAGKLHEFLSPEEDTDSTSDSTGSFYRTPQVPKQRGRWDVLESLFQSDPDSDLNDAEDEEDLESFFQDKSRGKPQVQDPPSLRHGSMRRCSSMTSLPSDIPKARILPTSDSGPPSQHRSVCSWASSITVPQPFRMTLREARKKAQWLASPASFEQERLQAQKQGEEEAECHRQFRAQPVPAHVYLPLYQEIMERREARRRAGIRKRKELLLSSLKPFSFLEKKEQQKEDAPQRDSAAVAQTKVSPKKATSRKIPKSILEPALGDKLQEAELLRKIRIQMRAMDTLRMASSPVSTARNRAPRTAARTQEEKLSFLQTEFEFQPKVNPVVPDYEGLYKAFQKRAAERRETRETTRNKPFLLRTANLSHTPRSCDAATAGGGKKSPQPTATPLPRSRSLSGLASFSANTLPVHITDATRKRESAVRMSLEKKDKSDMSIQWLEVHKKNCQAMSKSVTLRAKAMDPHKSLEEVFKAKLKENRSNDRKRAKEYKKELEEMKKRIQTRPYLFEQVTKALARKEAEERYRDALKQAGLEEEFVRTKSQGTEAV.

Disordered stretches follow at residues 1 to 166 (MTVG…VCSW), 265 to 297 (KKEQ…RKIP), and 386 to 444 (AERR…GLAS). Acidic residues predominate over residues 92–106 (PDSDLNDAEDEEDLE). Polar residues predominate over residues 151–166 (TSDSGPPSQHRSVCSW). Basic and acidic residues predominate over residues 265 to 275 (KKEQQKEDAPQ). Residues 287-297 (SPKKATSRKIP) show a composition bias toward basic residues. Residues 386-396 (AERRETRETTR) show a composition bias toward basic and acidic residues. Positions 510–577 (EEVFKAKLKE…ALKQAGLEEE (68 aa)) form a coiled coil.

Belongs to the FAM161 family. In terms of assembly, interacts with FAM161A.

The sequence is that of Protein FAM161B (Fam161b) from Mus musculus (Mouse).